The sequence spans 498 residues: Lysine--tRNA ligase (498 aa).

Glutamate 408 and glutamate 415 together coordinate Mg(2+).

The protein belongs to the class-II aminoacyl-tRNA synthetase family. In terms of assembly, homodimer. Mg(2+) serves as cofactor.

The protein resides in the cytoplasm. The catalysed reaction is tRNA(Lys) + L-lysine + ATP = L-lysyl-tRNA(Lys) + AMP + diphosphate. The sequence is that of Lysine--tRNA ligase from Listeria welshimeri serovar 6b (strain ATCC 35897 / DSM 20650 / CCUG 15529 / CIP 8149 / NCTC 11857 / SLCC 5334 / V8).